The primary structure comprises 625 residues: Coagulation factor XI (625 aa).

A signal peptide spans 1–18; it reads MIFLYQVVHFILFTSVSG. 4 Apple domains span residues 20-103, 110-193, 200-283, and 291-374; these read CVTQ…FKQC, CNKD…LKSC, CIRD…LQSC, and CHSS…LRLC. 17 disulfides stabilise this stretch: Cys-20–Cys-103, Cys-46–Cys-76, Cys-50–Cys-56, Cys-110–Cys-193, Cys-136–Cys-165, Cys-140–Cys-146, Cys-200–Cys-283, Cys-226–Cys-255, Cys-230–Cys-236, Cys-291–Cys-374, Cys-317–Cys-346, Cys-321–Cys-327, Cys-380–Cys-500, Cys-416–Cys-432, Cys-514–Cys-581, Cys-545–Cys-560, and Cys-571–Cys-599. Residues Asn-90 and Asn-126 are each glycosylated (N-linked (GlcNAc...) (complex) asparagine). The N-linked (GlcNAc...) (complex) asparagine; atypical glycan is linked to Asn-163. One can recognise a Peptidase S1 domain in the interval 388 to 623; sequence IVGGTASVRG…YVDWILEKTQ (236 aa). His-431 functions as the Charge relay system in the catalytic mechanism. Asn-450 carries an N-linked (GlcNAc...) (complex) asparagine glycan. Asp-480 serves as the catalytic Charge relay system. Asn-491 is a glycosylation site (N-linked (GlcNAc...) (complex) asparagine). 547-550 lines the heparin pocket; it reads KRYR. Residue Ser-575 is the Charge relay system of the active site.

This sequence belongs to the peptidase S1 family. Plasma kallikrein subfamily. In terms of assembly, homodimer; disulfide-linked. Can form non-covalently bonded homodimers. After activation the heavy and light chains are also linked by a disulfide bond. Interacts (activated) with F9 (inactive and activated) in calcium-dependent manner. Forms a heterodimer with SERPINA5. Interacts with Anopheles gambiae D7L2. Interacts (activated) with guianensin, an anticoagulant protein from Simulium guianense saliva. In terms of processing, N-glycosylated on both chains. N-glycosylated sites mainly consist of nonfucosylated sialylated biantennary (in high abundance) and/or triantennary (in low abundance) complex structures. Glycosylation at Asn-163 uses a rare non-canonical Asn-X-Cys glycosite. Activated by factor XIIa (or XII), which cleaves each polypeptide after Arg-387 into the light chain, which contains the active site, and the heavy chain, which associates with high molecular weight (HMW) kininogen. Activated by F12 (activated); the presence of negatively charged surfaces accelerates activation. Activated by F2 (thrombin); the presence of negatively charged surfaces, such as polyphosphate and dextran sulfate, strongly accelerates activation. Autoactivated; the presence of negatively charged surfaces, such as polyphosphate and dextran sulfate, accelerates autoactivation and autolysis. Isoform 2 is produced by platelets and megakaryocytes but absent from other blood cells.

The protein resides in the secreted. It carries out the reaction Selective cleavage of Arg-|-Ala and Arg-|-Val bonds in factor IX to form factor IXa.. With respect to regulation, inhibited by SERPINA5. Factor XI triggers the middle phase of the intrinsic pathway of blood coagulation by activating factor IX. The sequence is that of Coagulation factor XI (F11) from Homo sapiens (Human).